A 578-amino-acid polypeptide reads, in one-letter code: Membrane protein insertase YidC (578 aa).

A helical membrane pass occupies residues 3-23 (IQRSILIVALAVVSYLLVLQW). The tract at residues 34–71 (AASASMNTTQGLPDTPSAAGTSSDVPTAQSGAAGSEAA) is disordered. Residues 37-65 (ASMNTTQGLPDTPSAAGTSSDVPTAQSGA) are compositionally biased toward polar residues. The next 5 helical transmembrane spans lie at 361–381 (LELTVDYGFLWFIAQPIFWLL), 387–407 (LIGNWGWSIIALTVLIKLAFF), 457–477 (LGGCLPILVQMPVFLSLYWVL), 500–520 (PFFILPIVMGGTMLIQQMLNP), and 535–555 (PIIFTFFFLWFPAGLVLYWVV).

The protein belongs to the OXA1/ALB3/YidC family. Type 1 subfamily. As to quaternary structure, interacts with the Sec translocase complex via SecD. Specifically interacts with transmembrane segments of nascent integral membrane proteins during membrane integration.

The protein resides in the cell inner membrane. Required for the insertion and/or proper folding and/or complex formation of integral membrane proteins into the membrane. Involved in integration of membrane proteins that insert both dependently and independently of the Sec translocase complex, as well as at least some lipoproteins. Aids folding of multispanning membrane proteins. This Pseudomonas paraeruginosa (strain DSM 24068 / PA7) (Pseudomonas aeruginosa (strain PA7)) protein is Membrane protein insertase YidC.